Reading from the N-terminus, the 260-residue chain is 3-oxoadipate CoA-transferase subunit B (260 aa).

Residue Glu-51 is part of the active site.

This sequence belongs to the 3-oxoacid CoA-transferase subunit B family. As to quaternary structure, heterotetramer composed of 2 A and 2 B subunits.

The catalysed reaction is 3-oxoadipate + succinyl-CoA = 3-oxoadipyl-CoA + succinate. The protein operates within aromatic compound metabolism; beta-ketoadipate pathway; acetyl-CoA and succinyl-CoA from 3-oxoadipate: step 1/2. The protein is 3-oxoadipate CoA-transferase subunit B (catJ) of Pseudomonas knackmussii (strain DSM 6978 / CCUG 54928 / LMG 23759 / B13).